We begin with the raw amino-acid sequence, 475 residues long: MAAGALRGLPVAGGGESSESEDDGWEIGYLDRTSQKLKGLLPIEEKKEKFKKAMTIGDVSLVQELLDSGISVDSTFQYGWTPLMYAASVANAELVRVLLDRGANASFEKDKQTILITACSAHGSEEQILKCVELLLSRNADPNVACRRLMTPIMYAARDGHTQVVALLVAHGAEVNTQDENGYTALTWAARQGHKNIVLKLLELGANKMLQTKDGKMPSEIAKRNKHHEIFNLLSFTLNPLEGKLQQLTKEDTICKILTTDSDREKDHIFSSYTAFGDLEVFLHGIGLEHMTDLLKERDITLRHLLTMREDEFTKNGITSKDQQKILAALKELQVEEIQFGELSEEIKLEISGDEFLNFLLKLNKQCGHLITAVQNIITELPVNSQKITLEWASPRNFTSVCEELVNNAEDLSEEVCKLKDLIQKLQNERENDPTHIQLREEVSTWNSRILKRTAITVCGFGFLLFICKLTFQRK.

The segment at 1 to 25 (MAAGALRGLPVAGGGESSESEDDGW) is disordered. S17, S18, and S20 each carry phosphoserine. 6 ANK repeats span residues 45–74 (EKKEKFKKAMTIGDVSLVQELLDSGISVDS), 78–107 (YGWTPLMYAASVANAELVRVLLDRGANASF), 110–144 (DKQTILITACSAHGSEEQILKCVELLLSRNADPNV), 148–177 (RLMTPIMYAARDGHTQVVALLVAHGAEVNT), 181–210 (NGYTALTWAARQGHKNIVLKLLELGANKML), and 214–243 (DGKMPSEIAKRNKHHEIFNLLSFTLNPLEG). The region spanning 272 to 334 (SYTAFGDLEV…KILAALKELQ (63 aa)) is the SAM domain.

In terms of assembly, interacts with DDX4, PIWIL1, RANBP9 and TDRD1.

Its subcellular location is the cytoplasm. In terms of biological role, plays a central role during spermatogenesis by repressing transposable elements and preventing their mobilization, which is essential for the germline integrity. Acts via the piRNA metabolic process, which mediates the repression of transposable elements during meiosis by forming complexes composed of piRNAs and Piwi proteins and governs the methylation and subsequent repression of transposons. Its association with pi-bodies suggests a participation in the primary piRNAs metabolic process. Required prior to the pachytene stage to facilitate the production of multiple types of piRNAs, including those associated with repeats involved in the regulation of retrotransposons. May act by mediating protein-protein interactions during germ cell maturation. In Papio anubis (Olive baboon), this protein is Ankyrin repeat, SAM and basic leucine zipper domain-containing protein 1 (ASZ1).